Consider the following 440-residue polypeptide: L-gulonolactone oxidase (440 aa).

The FAD-binding PCMH-type domain maps to 17–187; that stretch reads YGCCPEMYFQ…LTVTLQCVPQ (171 aa). Position 54 is a pros-8alpha-FAD histidine (His54). The helical transmembrane segment at 253–273 threads the bilayer; sequence FYLLEFLLWISTFLPGLVGWI.

This sequence belongs to the oxygen-dependent FAD-linked oxidoreductase family. It depends on FAD as a cofactor.

The protein localises to the microsome membrane. Its subcellular location is the endoplasmic reticulum membrane. It carries out the reaction L-gulono-1,4-lactone + O2 = L-ascorbate + H2O2 + H(+). It functions in the pathway cofactor biosynthesis; L-ascorbate biosynthesis via UDP-alpha-D-glucuronate pathway; L-ascorbate from UDP-alpha-D-glucuronate: step 4/4. Its function is as follows. Oxidizes L-gulono-1,4-lactone to hydrogen peroxide and L-xylo-hexulonolactone which spontaneously isomerizes to L-ascorbate. This Bos taurus (Bovine) protein is L-gulonolactone oxidase (GULO).